An 846-amino-acid polypeptide reads, in one-letter code: Homeodomain-interacting protein kinase 1 (846 aa).

A disordered region spans residues 47–74 (NPFSIQKAPGTSSDNEQRAPKRRADEEA). Basic and acidic residues predominate over residues 61–72 (NEQRAPKRRADE). Positions 147–483 (YEVLEFLGKG…PAEGLESKFV (337 aa)) constitute a Protein kinase domain. ATP is bound by residues 153–161 (LGKGTFGQV) and K176. Catalysis depends on D272, which acts as the Proton acceptor. Positions 741 to 790 (LAAQPKKNSPAPSVITLSSDEDSNGAGSSNSGSTTRTGAVNPVRNDTLPM) are disordered. The segment covering 746–757 (KKNSPAPSVITL) has biased composition (polar residues). Residues 764 to 773 (NGAGSSNSGS) show a composition bias toward low complexity.

This sequence belongs to the protein kinase superfamily. CMGC Ser/Thr protein kinase family. HIPK subfamily. Broadly expressed during embryogenesis. Expression becomes more restricted during larval development. L3 larvae display robust expression in many head and motor neurons, and lower levels of expression in the intestine and the seam cells of the hypodermis. By late L4 stage, expression is largely restricted to neurons and is maintained in nerve cells of the head and nerve cord during adulthood. Expressed in adult pharyngeal cells, hypodermal cells, gonadal sheath cells and distal tip cells but not in germline cells. Expressed in serotonergic neurons such as ADF and NSM and in GABAergic neurons, including RME, RIS and DVB.

Its subcellular location is the nucleus. The enzyme catalyses L-seryl-[protein] + ATP = O-phospho-L-seryl-[protein] + ADP + H(+). It catalyses the reaction L-threonyl-[protein] + ATP = O-phospho-L-threonyl-[protein] + ADP + H(+). Serine/threonine-protein kinase required in the somatic gonadal cells to regulate germline proliferation during larval development and in adulthood. Plays a role in the development/differentiation of gonadal distal tip cells. Required for normal lifespan in a pha-4 and mxl-2-dependent manner. Also contributes to survival following heat or oxidative stress. Prevents sumoylation and inactivation of heat shock transcription factor hsf-1 which enhances hsf-1-dependent transcriptional induction of chaperones in response to heat shock. Also required for hormetic extension of longevity in response to heat stress. Also contributes to longevity by promoting autophagy under nutrient stress conditions through induction of autophagosome formation and autophagy gene expression. Provides protection against proteotoxic polyglutamine aggregate and the associated locomotory toxicity, probably as a result of kinase activity. Contributes to longevity via gamma-aminobutyric acid (GABA)ergic signaling by promoting autophagy through mxl-2, hlh-30 and daf-16 but independent of hsf-1 and phas-4, to induce autophagosome formation and the expression of autophagy genes. Promotes thermotolerance via serotonergic signaling by serotonergic neurons. Preserves neuronal function in aging animals by mitigating against age-associated decline in axonal and synaptic transmissions. Acts as an activator of nhr-49-dependent hypoxia response, including the up-regulation of fmo-2 and acs-2, the induction of autophagosome formation and expression of autophagy genes. The chain is Homeodomain-interacting protein kinase 1 from Caenorhabditis elegans.